A 97-amino-acid chain; its full sequence is Large ribosomal subunit protein uL23 (97 aa).

This sequence belongs to the universal ribosomal protein uL23 family. As to quaternary structure, part of the 50S ribosomal subunit. Contacts protein L29, and trigger factor when it is bound to the ribosome.

In terms of biological role, one of the early assembly proteins it binds 23S rRNA. One of the proteins that surrounds the polypeptide exit tunnel on the outside of the ribosome. Forms the main docking site for trigger factor binding to the ribosome. The protein is Large ribosomal subunit protein uL23 of Brucella abortus (strain S19).